The following is a 106-amino-acid chain: Urease subunit beta (106 aa).

Belongs to the urease beta subunit family. As to quaternary structure, heterotrimer of UreA (gamma), UreB (beta) and UreC (alpha) subunits. Three heterotrimers associate to form the active enzyme.

Its subcellular location is the cytoplasm. It catalyses the reaction urea + 2 H2O + H(+) = hydrogencarbonate + 2 NH4(+). It participates in nitrogen metabolism; urea degradation; CO(2) and NH(3) from urea (urease route): step 1/1. In Synechococcus sp. (strain WH7805), this protein is Urease subunit beta.